The sequence spans 20 residues: Alpha-conotoxin-like ts14a (20 aa).

Cystine bridges form between Cys3/Cys16 and Cys14/Cys20.

As to expression, expressed by the venom duct.

It is found in the secreted. In terms of biological role, alpha-conotoxins act on postsynaptic membranes, they bind to the nicotinic acetylcholine receptors (nAChR) and thus inhibit them. This chain is Alpha-conotoxin-like ts14a, found in Conus tessulatus (Tessellate cone).